The sequence spans 1129 residues: A-kinase anchor protein 11 (1129 aa).

The span at 1-12 (MQKMQCHLRRPL) shows a compositional bias: basic residues. Positions 1–21 (MQKMQCHLRRPLHSSSSFSSQ) are disordered. Phosphothreonine is present on residues Thr-251 and Thr-363. 3 disordered regions span residues 354–376 (IRDR…QTSS), 394–416 (EFAP…SENE), and 434–455 (SEEV…SEHS). The span at 404-416 (PHNSSVGSLSENE) shows a compositional bias: polar residues. Ser-434, Ser-439, and Ser-440 each carry phosphoserine. The segment covering 442–455 (GEEHPEMDVKSEHS) has biased composition (basic and acidic residues). Ser-595 carries the post-translational modification Phosphoserine. Thr-742 is subject to Phosphothreonine. The residue at position 835 (Ser-835) is a Phosphoserine. The PKA-RII binding region stretch occupies residues 905-918 (LAEKIVAEAIEKAE). The interval 962–1061 (SKEVEDFQST…QEDGAEGLQP (100 aa)) is disordered. Over residues 968-995 (FQSTESLGSQQMNLSVGEDSTGSWSNLS) the composition is skewed to polar residues. Over residues 1002–1011 (DESSSFHHLS) the composition is skewed to basic and acidic residues. The segment covering 1012-1028 (ESSNGNSSSWSSLGLEG) has biased composition (low complexity). Residues 1033 to 1042 (NNLSFPTSDS) show a composition bias toward polar residues. The span at 1043–1056 (DGPDDRESEQEDGA) shows a compositional bias: acidic residues.

As to expression, expressed in brain and testis.

It is found in the peroxisome. In terms of biological role, binds to type II regulatory subunits of protein kinase A and anchors/targets them. The sequence is that of A-kinase anchor protein 11 (Akap11) from Rattus norvegicus (Rat).